We begin with the raw amino-acid sequence, 252 residues long: Imidazole glycerol phosphate synthase subunit HisF (252 aa).

Active-site residues include D11 and D130.

The protein belongs to the HisA/HisF family. In terms of assembly, heterodimer of HisH and HisF.

Its subcellular location is the cytoplasm. The enzyme catalyses 5-[(5-phospho-1-deoxy-D-ribulos-1-ylimino)methylamino]-1-(5-phospho-beta-D-ribosyl)imidazole-4-carboxamide + L-glutamine = D-erythro-1-(imidazol-4-yl)glycerol 3-phosphate + 5-amino-1-(5-phospho-beta-D-ribosyl)imidazole-4-carboxamide + L-glutamate + H(+). It participates in amino-acid biosynthesis; L-histidine biosynthesis; L-histidine from 5-phospho-alpha-D-ribose 1-diphosphate: step 5/9. In terms of biological role, IGPS catalyzes the conversion of PRFAR and glutamine to IGP, AICAR and glutamate. The HisF subunit catalyzes the cyclization activity that produces IGP and AICAR from PRFAR using the ammonia provided by the HisH subunit. This chain is Imidazole glycerol phosphate synthase subunit HisF, found in Staphylococcus aureus (strain MRSA252).